A 212-amino-acid polypeptide reads, in one-letter code: Thymidylate kinase (212 aa).

Residue 10–17 (GPEGAGKT) coordinates ATP.

The protein belongs to the thymidylate kinase family.

The enzyme catalyses dTMP + ATP = dTDP + ADP. Functionally, phosphorylation of dTMP to form dTDP in both de novo and salvage pathways of dTTP synthesis. The polypeptide is Thymidylate kinase (Bacillus licheniformis (strain ATCC 14580 / DSM 13 / JCM 2505 / CCUG 7422 / NBRC 12200 / NCIMB 9375 / NCTC 10341 / NRRL NRS-1264 / Gibson 46)).